Here is a 234-residue protein sequence, read N- to C-terminus: NAD-reducing hydrogenase HoxS subunit gamma (234 aa).

The 2Fe-2S ferredoxin-type domain occupies S2–E77. Positions 35, 46, 49, and 61 each coordinate [2Fe-2S] cluster. The 4Fe-4S His(Cys)3-ligated-type domain maps to E77–D116. 8 residues coordinate [4Fe-4S] cluster: H95, C97, C100, C106, C145, C148, C151, and C198.

Belongs to the complex I 75 kDa subunit family. Tetramer of an alpha and a gamma subunits (flavin-containing dimer), and a delta and a nickel-containing beta subunits (hydrogenase dimer). The cofactor is [2Fe-2S] cluster. [4Fe-4S] cluster serves as cofactor.

The protein resides in the cytoplasm. It catalyses the reaction H2 + NAD(+) = NADH + H(+). Subunits alpha and gamma of HoxS constitute an NADH--oxidoreductase. This is NAD-reducing hydrogenase HoxS subunit gamma (hoxU) from Cupriavidus necator (strain ATCC 17699 / DSM 428 / KCTC 22496 / NCIMB 10442 / H16 / Stanier 337) (Ralstonia eutropha).